We begin with the raw amino-acid sequence, 834 residues long: MNLTRREFAKANAAAIAAAAAGLPILVRASNLVTEADVTSLVWNKAPCRFCGTGCSVMVATRDGQVVATHGDIKAEVNRGINCVKGYFLSKIMYGSDRLTRPLLRMKDGKFDKQGEFQPISWEQAFDIMAEKFKAALKAKGPESVGMFGSGQWTVWEGYAANKLFKAGLRSNNIDPNARHCMASAVMGFMRSFGMDEPMGCYDDIEATDSFVLWGSNMAEMHPVLWSRVTDRRLSAPQVKVAVLSTFEHRSFELADLPMVFKPQTDLIILNYIANHIIESGAVNRDFVERHVRFAHGAEDIGYGLRPDDPLEKKAKNADKANTWSDIDFKAFAEFVKPYTLERTARESGVPAERLKALAELYADPKRKVVSFWTMGFNQHTRGVWANNLIYNIHLLTGKISEPGNSPFSLTGQPSACGTAREVGTFSHRLPADLVVTNPKHRETAEKIWKVPAGTIQEKVGFHAVQQSRMLNDGVLNVYWTQVSNNMQAGPNVMQEVLPGWRNPDNFVIVSDVYPTVSAQAADLILPSAMWVEKEGAFGNAERRTQFWHQLVKAPGEAKSDLWQLVEFSKRFTTDEVWPAELLAKAPELKGKTLYDVLFRNGQVDRFPASDLAKGYANDEVDAFGFYIQKGLFEEYAAFGRGHGHDLAPFDAYHEARGLRWPVVDGKETRWRYREGYDPYVSKGSGVQFYGYPDKKAIVFALPYEPPAEAPDQDYPFWLATGRVLEHWHTGSMTARVPELYKAVPDALVYMHPEDARQLKLRRGSEVKVVSRRGEIRARVETRGRNKPPQGLVFVPFFDANKLINKVTLDATDPISKQTDYKKCAVRIELLNLA.

The tat-type signal signal peptide spans 1–29; sequence MNLTRREFAKANAAAIAAAAAGLPILVRA. A 4Fe-4S Mo/W bis-MGD-type domain is found at 41–97; the sequence is LVWNKAPCRFCGTGCSVMVATRDGQVVATHGDIKAEVNRGINCVKGYFLSKIMYGSD. Residues cysteine 48, cysteine 51, cysteine 55, and cysteine 83 each contribute to the [4Fe-4S] cluster site. Residues lysine 85, glutamine 152, asparagine 177, cysteine 181, 214–221, 245–249, 264–266, methionine 375, glutamine 379, asparagine 485, 511–512, lysine 534, aspartate 561, and 721–730 contribute to the Mo-bis(molybdopterin guanine dinucleotide) site; these read WGSNMAEM, STFEH, QTD, SD, and TGRVLEHWHT. Phenylalanine 797 serves as a coordination point for substrate. Residues asparagine 805 and lysine 822 each contribute to the Mo-bis(molybdopterin guanine dinucleotide) site.

It belongs to the prokaryotic molybdopterin-containing oxidoreductase family. NasA/NapA/NarB subfamily. Component of the periplasmic nitrate reductase NapAB complex composed of NapA and NapB. It depends on [4Fe-4S] cluster as a cofactor. The cofactor is Mo-bis(molybdopterin guanine dinucleotide). Predicted to be exported by the Tat system. The position of the signal peptide cleavage has not been experimentally proven.

The protein localises to the periplasm. It catalyses the reaction 2 Fe(II)-[cytochrome] + nitrate + 2 H(+) = 2 Fe(III)-[cytochrome] + nitrite + H2O. Its function is as follows. Catalytic subunit of the periplasmic nitrate reductase complex NapAB. Receives electrons from NapB and catalyzes the reduction of nitrate to nitrite. The polypeptide is Periplasmic nitrate reductase (Pseudomonas aeruginosa (strain UCBPP-PA14)).